We begin with the raw amino-acid sequence, 237 residues long: UPF0173 metal-dependent hydrolase BruAb2_0628 (237 aa).

This sequence belongs to the UPF0173 family.

This Brucella abortus biovar 1 (strain 9-941) protein is UPF0173 metal-dependent hydrolase BruAb2_0628.